A 258-amino-acid polypeptide reads, in one-letter code: MDRIIEKLDRGWWIVSHEQKLWLPAGELPHGDAEQFDLVGQPALKIGEWQGDAVWLIQQNRRQDMGSVRQVMDLDAGLFQLAGRGVQLAEFYRSHKFCGYCGHAMHPSKTEWALLCSHCRERYYPQIAPCIIVAIRRDDSILLAQHVRHRNGIHTVLAGFVEVGETLEQTVAREVMEESGIKVKNLRYVTSQPWPFPMSLMTAFMADYDSGDIVIDPKELLEANWYRYDDLPLLPPPGTVARRLIEDTVAMCRADYEV.

Arg69 provides a ligand contact to substrate. Zn(2+) is bound by residues Cys98 and Cys101. Residue Glu111 coordinates substrate. Zn(2+)-binding residues include Cys116 and Cys119. Substrate is bound at residue Tyr124. A Nudix hydrolase domain is found at 125–248 (PQIAPCIIVA…TVARRLIEDT (124 aa)). Positions 158, 174, and 178 each coordinate a divalent metal cation. The Nudix box motif lies at 159-180 (GFVEVGETLEQTVAREVMEESG). 192–199 (QPWPFPMS) contributes to the substrate binding site. Residue Glu219 coordinates a divalent metal cation. Residue Ala241 coordinates substrate.

It belongs to the Nudix hydrolase family. NudC subfamily. Homodimer. Mg(2+) serves as cofactor. Mn(2+) is required as a cofactor. Requires Zn(2+) as cofactor.

The enzyme catalyses a 5'-end NAD(+)-phospho-ribonucleoside in mRNA + H2O = a 5'-end phospho-adenosine-phospho-ribonucleoside in mRNA + beta-nicotinamide D-ribonucleotide + 2 H(+). The catalysed reaction is NAD(+) + H2O = beta-nicotinamide D-ribonucleotide + AMP + 2 H(+). It catalyses the reaction NADH + H2O = reduced beta-nicotinamide D-ribonucleotide + AMP + 2 H(+). MRNA decapping enzyme that specifically removes the nicotinamide adenine dinucleotide (NAD) cap from a subset of mRNAs by hydrolyzing the diphosphate linkage to produce nicotinamide mononucleotide (NMN) and 5' monophosphate mRNA. The NAD-cap is present at the 5'-end of some mRNAs and stabilizes RNA against 5'-processing. Has preference for mRNAs with a 5'-end purine. Catalyzes the hydrolysis of a broad range of dinucleotide pyrophosphates. In Enterobacter sp. (strain 638), this protein is NAD-capped RNA hydrolase NudC.